Reading from the N-terminus, the 935-residue chain is Bifunctional alpha-galactosidase/sucrose kinase AgaSK (935 aa).

The segment at 1-720 (MAIIYNPNKK…EAYQFAFTEL (720 aa)) is alpha-galactosidase. Residues E176, E277, and F280 each contribute to the Mg(2+) site. Substrate contacts are provided by residues 366 to 367 (DD), R443, 476 to 480 (KWDMN), and 518 to 521 (CSGG). The active-site Nucleophile is the D526. D540 provides a ligand contact to substrate. E606 serves as the catalytic Proton donor/acceptor. Residues 721–935 (KEAGRLYEKV…VGKDGSVYEQ (215 aa)) are sucrose kinase. ATP-binding positions include 748-752 (GGSGS) and A824.

It in the N-terminal section; belongs to the glycosyl hydrolase 36 family. This sequence in the C-terminal section; belongs to the uridine kinase family. As to quaternary structure, homotetramer. Mg(2+) is required as a cofactor.

The enzyme catalyses Hydrolysis of terminal, non-reducing alpha-D-galactose residues in alpha-D-galactosides, including galactose oligosaccharides, galactomannans and galactolipids.. Bifunctional enzyme with alpha-galactosidase and sucrose kinase activities. Produces sucrose-6-phosphate directly from raffinose. Binds ATP. Phosphorylates sucrose specifically on the C6 position of glucose in the presence of ATP. Hydrolyzes melibiose, raffinose, stachyose and synthetic substrate p-nitrophenyl-alpha-D-galactopyranoside with high activity. Low activity against locust bean gum, guar gum and synthetic substrates xylose alpha-D-4-nitrophenol, glucose alpha-D-4-nitrophenol and o-nitrophenyl-alpha-D-galactopyranoside. In Mediterraneibacter gnavus (Ruminococcus gnavus), this protein is Bifunctional alpha-galactosidase/sucrose kinase AgaSK.